Reading from the N-terminus, the 327-residue chain is Probable cell division protein WhiA (327 aa).

The H-T-H motif DNA-binding region spans 275–308; that stretch reads SLEELGRLADPPMTKDAVAGRIRRLLSMADRKAK.

This sequence belongs to the WhiA family.

Functionally, involved in cell division and chromosome segregation. In Mycobacterium marinum (strain ATCC BAA-535 / M), this protein is Probable cell division protein WhiA.